A 427-amino-acid polypeptide reads, in one-letter code: Glutamate-1-semialdehyde 2,1-aminomutase (427 aa).

Lysine 265 is modified (N6-(pyridoxal phosphate)lysine).

Belongs to the class-III pyridoxal-phosphate-dependent aminotransferase family. HemL subfamily. In terms of assembly, homodimer. Pyridoxal 5'-phosphate is required as a cofactor.

Its subcellular location is the cytoplasm. It carries out the reaction (S)-4-amino-5-oxopentanoate = 5-aminolevulinate. It participates in porphyrin-containing compound metabolism; protoporphyrin-IX biosynthesis; 5-aminolevulinate from L-glutamyl-tRNA(Glu): step 2/2. The chain is Glutamate-1-semialdehyde 2,1-aminomutase from Pseudomonas putida (strain GB-1).